The following is a 428-amino-acid chain: Flotillin-2a (428 aa).

3 S-palmitoyl cysteine lipidation sites follow: Cys-4, Cys-19, and Cys-20.

This sequence belongs to the band 7/mec-2 family. Flotillin subfamily. In terms of assembly, heterooligomer; Heterooligomerizes with ic complex of flotillins 1 and 2. Post-translationally, palmitoylation may be required for the formation of higher order complexes and for neurite outgrowth in cultured neural stem cells.

Its subcellular location is the membrane. It is found in the endosome. In terms of biological role, may play a role in axon growth and regeneration. May be involved in epidermal cell adhesion and epidermal structure and function. This Danio rerio (Zebrafish) protein is Flotillin-2a (flot2a).